Reading from the N-terminus, the 64-residue chain is Large ribosomal subunit protein bL35 (64 aa).

A disordered region spans residues methionine 1–phenylalanine 27.

Belongs to the bacterial ribosomal protein bL35 family.

The protein is Large ribosomal subunit protein bL35 of Azotobacter vinelandii (strain DJ / ATCC BAA-1303).